A 301-amino-acid chain; its full sequence is Transcriptional activator protein NhaR (301 aa).

Residues 6–63 (INYNHLYYFWHVYKEGSVVGAAEALYLTPQTITGQIRALEERLQGKLFKRKGRGLEPS) form the HTH lysR-type domain. The H-T-H motif DNA-binding region spans 23–42 (VVGAAEALYLTPQTITGQIR).

It belongs to the LysR transcriptional regulatory family.

Its subcellular location is the cytoplasm. Functionally, plays a role in the positive regulation of NhaA. In Escherichia coli (strain K12), this protein is Transcriptional activator protein NhaR (nhaR).